The primary structure comprises 529 residues: GMP synthase [glutamine-hydrolyzing] (529 aa).

A Glutamine amidotransferase type-1 domain is found at 16–205 (PVLVVDFGAQ…LHDFAGLDAD (190 aa)). Cysteine 93 serves as the catalytic Nucleophile. Active-site residues include histidine 179 and glutamate 181. The region spanning 206–403 (WTAANIAGVL…LDLPEEIVAR (198 aa)) is the GMPS ATP-PPase domain. 233 to 239 (SGGVDSA) lines the ATP pocket.

As to quaternary structure, homodimer.

It catalyses the reaction XMP + L-glutamine + ATP + H2O = GMP + L-glutamate + AMP + diphosphate + 2 H(+). Its pathway is purine metabolism; GMP biosynthesis; GMP from XMP (L-Gln route): step 1/1. Its function is as follows. Catalyzes the synthesis of GMP from XMP. This chain is GMP synthase [glutamine-hydrolyzing], found in Mycobacterium leprae (strain Br4923).